The primary structure comprises 232 residues: Chaperone protein CssC (232 aa).

Residues 1-20 (MKSKLIILLTLVPFSSFSTG) form the signal peptide.

It belongs to the periplasmic pilus chaperone family.

The protein localises to the periplasm. Functionally, involved in the biogenesis of the CS6 fimbria. The sequence is that of Chaperone protein CssC (cssC) from Escherichia coli.